Here is a 683-residue protein sequence, read N- to C-terminus: uncharacterized protein (683 aa).

The next 14 helical transmembrane spans lie at 12 to 32 (LLLY…MMGL), 41 to 61 (LWLG…IGLI), 84 to 104 (MAIA…GILF), 110 to 130 (GLAY…LLAP), 162 to 182 (IAVL…IQGV), 194 to 214 (FAVG…LGGM), 221 to 241 (QVAQ…MIAW), 377 to 397 (LNFV…PHIL), 413 to 433 (VAWA…LAAL), 495 to 515 (IAGL…AAAL), 548 to 568 (VTTA…VTSL), 573 to 593 (ILFL…PVLV), 603 to 623 (AAGA…YIIV), and 645 to 665 (IASG…VSLL).

The protein belongs to the sodium:solute symporter (SSF) (TC 2.A.21) family.

Its subcellular location is the cell membrane. This is an uncharacterized protein from Cupriavidus necator (strain ATCC 17699 / DSM 428 / KCTC 22496 / NCIMB 10442 / H16 / Stanier 337) (Ralstonia eutropha).